The primary structure comprises 131 residues: Small ribosomal subunit protein uS11 (131 aa).

Belongs to the universal ribosomal protein uS11 family. Part of the 30S ribosomal subunit. Interacts with proteins S7 and S18. Binds to IF-3. Interacts with VmlR. Interacts with BrxC.

In terms of biological role, located on the platform of the 30S subunit, it bridges several disparate RNA helices of the 16S rRNA. Forms part of the Shine-Dalgarno cleft in the 70S ribosome. The protein is Small ribosomal subunit protein uS11 of Bacillus subtilis (strain 168).